The following is a 174-amino-acid chain: Neuromedin-U (174 aa).

The signal sequence occupies residues 1–34; that stretch reads MLRTESCRPRSPAGQVAAASPLLLLLLLLAWCAG. Residues 35-103 constitute a propeptide that is removed on maturation; that stretch reads ACRGAPILPQ…EQDEKDNTKR (69 aa). Methionine sulfoxide; partial is present on Met139. An Asparagine amide modification is found at Asn166. Positions 170 to 174 are excised as a propeptide; the sequence is SAGFI.

Belongs to the NmU family. As to expression, expressed throughout the enteric nervous system with highest levels being found in the jejunum.

It is found in the secreted. Its function is as follows. Ligand for receptors NMUR1 and NMUR2. Stimulates muscle contractions of specific regions of the gastrointestinal tract. In humans, NmU stimulates contractions of the ileum and urinary bladder. Functionally, does not function as a ligand for either NMUR1 or NMUR2. Indirectly induces prolactin release although its potency is much lower than that of neuromedin precursor-related peptide 36. In terms of biological role, does not function as a ligand for either NMUR1 or NMUR2. Indirectly induces prolactin release from lactotroph cells in the pituitary gland, probably via the hypothalamic dopaminergic system. This Homo sapiens (Human) protein is Neuromedin-U (NMU).